The following is a 101-amino-acid chain: MMLEHVLVLSAYLFSIGIYGLITSRNMVRALMCLELILNAVNMNLVTFSDFFDNRQLKGNIFSIFVIAIAAAEAAIGPAIVSSISRNRKSIRINQSNLLNK.

A run of 3 helical transmembrane segments spans residues 2 to 22, 32 to 52, and 61 to 81; these read MLEHVLVLSAYLFSIGIYGLI, MCLELILNAVNMNLVTFSDFF, and IFSIFVIAIAAAEAAIGPAIV.

The protein belongs to the complex I subunit 4L family. As to quaternary structure, NDH is composed of at least 16 different subunits, 5 of which are encoded in the nucleus.

It is found in the plastid. Its subcellular location is the chloroplast thylakoid membrane. The enzyme catalyses a plastoquinone + NADH + (n+1) H(+)(in) = a plastoquinol + NAD(+) + n H(+)(out). It carries out the reaction a plastoquinone + NADPH + (n+1) H(+)(in) = a plastoquinol + NADP(+) + n H(+)(out). Its function is as follows. NDH shuttles electrons from NAD(P)H:plastoquinone, via FMN and iron-sulfur (Fe-S) centers, to quinones in the photosynthetic chain and possibly in a chloroplast respiratory chain. The immediate electron acceptor for the enzyme in this species is believed to be plastoquinone. Couples the redox reaction to proton translocation, and thus conserves the redox energy in a proton gradient. The polypeptide is NAD(P)H-quinone oxidoreductase subunit 4L, chloroplastic (Lotus japonicus (Lotus corniculatus var. japonicus)).